A 215-amino-acid polypeptide reads, in one-letter code: Extracellular small neutral protease (215 aa).

An N-terminal signal peptide occupies residues 1 to 30 (MRMTRAASALAGLGLAVAAALGSVAPASAA). Ca(2+) is bound at residue Thr152. Position 157 (His157) interacts with Zn(2+). Residue Glu158 is part of the active site. His161 and Asp167 together coordinate Zn(2+). Cysteines 173 and 186 form a disulfide.

This sequence belongs to the peptidase M7 family. It depends on Zn(2+) as a cofactor.

Its subcellular location is the secreted. It catalyses the reaction Hydrolyzes proteins with a preference for Tyr or Phe in the P1' position. Has no action on amino-acid p-nitroanilides.. The sequence is that of Extracellular small neutral protease (snpA) from Streptomyces coelicolor.